Consider the following 113-residue polypeptide: Large ribosomal subunit protein P2 (113 aa).

A disordered region spans residues 66-113; the sequence is PVGGGGAVAAADAAPAAAAGGDKKEAKKEEKKEESESEDDDMGFALFE. Positions 73–85 are enriched in low complexity; that stretch reads VAAADAAPAAAAG. The segment covering 86-99 has biased composition (basic and acidic residues); the sequence is GDKKEAKKEEKKEE. Phosphoserine occurs at positions 100 and 102.

The protein belongs to the eukaryotic ribosomal protein P1/P2 family. In terms of assembly, P1 and P2 exist as dimers at the large ribosomal subunit.

Plays an important role in the elongation step of protein synthesis. The polypeptide is Large ribosomal subunit protein P2 (RpLP2) (Drosophila melanogaster (Fruit fly)).